The sequence spans 284 residues: MSMLPSFGFTQEQVACVCEVLQQGGNLERLGRFLWSLPACDHLHKNESVLKAKAVVAFHRGNFRELYKILESHQFSPHNHPKLQQLWLKAHYVEAEKLRGRPLGAVGKYRVRRKFPLPRTIWDGEETSYCFKEKSRGVLREWYAHNPYPSPREKRELAEATGLTTTQVSNWFKNRRQRDRAAEAKERENTENNNTSTNKQNQLSPLDGGKSLMSSSEEEFSPPQSPDQNSVLLLQGSLTHPGATSYSLSALSASQGSHGLQGHQHQLQDSLLGPLTSSLVDLGS.

A DNA-binding region (homeobox) is located at residues 124-183; it reads GEETSYCFKEKSRGVLREWYAHNPYPSPREKRELAEATGLTTTQVSNWFKNRRQRDRAAE. The segment at 168 to 230 is disordered; sequence VSNWFKNRRQ…SPPQSPDQNS (63 aa). Basic and acidic residues predominate over residues 179–190; the sequence is DRAAEAKERENT. Residues 191-202 show a composition bias toward low complexity; the sequence is ENNNTSTNKQNQ.

This sequence belongs to the SIX/Sine oculis homeobox family.

Its subcellular location is the nucleus. The protein localises to the cytoplasm. Functionally, transcription factor that is involved in the regulation of cell proliferation, apoptosis and embryonic development. Depending on context, functions as a transcriptional repressor or activator. Required for the normal formation of pre-placodal ectoderm. In Xenopus laevis (African clawed frog), this protein is Homeobox protein six1 (six1).